The chain runs to 496 residues: Splicing factor U2AF 65 kDa subunit (496 aa).

The span at 1–26 (MSDHQDGMKLEDIERQFLDVAQREGG) shows a compositional bias: basic and acidic residues. Residues 1–142 (MSDHQDGMKL…PKKYRFWDVP (142 aa)) form a disordered region. The span at 59-77 (KKRKRSRSRDRDTRRRSRS) shows a compositional bias: basic residues. 2 stretches are compositionally biased toward basic and acidic residues: residues 78 to 96 (RDRGERRGGGGGGDRDRSR) and 105 to 138 (GGRDEPRRRGGDDEARSRREPEPQKPREPKKYRF). RRM domains lie at 184-266 (RRLY…RPRD), 291-368 (NKIF…LACA), and 404-488 (NMVT…YYDV).

Forms a heterodimer with the U2AF small subunit.

It localises to the nucleus. Necessary for the splicing of pre-mRNA. Binds to the polypyrimidine tract of introns early during spliceosome assembly. This chain is Splicing factor U2AF 65 kDa subunit (uaf-1), found in Caenorhabditis elegans.